The primary structure comprises 273 residues: Protein PERCC1 (273 aa).

2 disordered regions span residues 18 to 84 (SHES…PETP) and 253 to 273 (GGSE…LAEV). The segment covering 28-56 (EAPEISEEEEEEEEEEEEEEEEEEVDQDQ) has biased composition (acidic residues). Positions 67 to 83 (DSQSSGVVPQDPSSPET) are enriched in polar residues.

Specifically expressed in the stomach, pancreas and intestine. In gastrointestinal tissue, expression is primarily restricted to gastric G cells and duodenal enteroendocrine cells (EECs).

Plays a critical role in intestinal function by promoting the development of enteroendocrine cells (EECs) of the gastrointestinal tract and pancreas. It is thereby required for normal enteroendocrine peptide hormone secretion. This is Protein PERCC1 from Mus musculus (Mouse).